The primary structure comprises 611 residues: Ankyrin repeat protein SKIP35 (611 aa).

6 ANK repeats span residues 292–322 (LFSN…EGGA), 323–353 (DNVN…RNSL), 356–384 (DVDL…NAIA), 385–414 (FLGP…DMEL), 416–442 (LALT…PPVL), and 445–478 (LSIE…DSTA).

As to quaternary structure, interacts with SKP1A/ASK1.

The polypeptide is Ankyrin repeat protein SKIP35 (SKIP35) (Arabidopsis thaliana (Mouse-ear cress)).